Reading from the N-terminus, the 129-residue chain is Follitropin subunit beta (129 aa).

Positions 1 to 20 (MKSVQLCFLFCCWRAICCKS) are cleaved as a signal peptide. Cystine bridges form between cysteine 21–cysteine 69, cysteine 35–cysteine 84, cysteine 38–cysteine 122, cysteine 46–cysteine 100, cysteine 50–cysteine 102, and cysteine 105–cysteine 112. N-linked (GlcNAc...) asparagine glycans are attached at residues asparagine 25 and asparagine 42.

It belongs to the glycoprotein hormones subunit beta family. In terms of assembly, heterodimer. The active follitropin is a heterodimer composed of an alpha chain/CGA shared with other hormones and a unique beta chain/FSHB shown here.

The protein localises to the secreted. Functionally, together with the alpha chain CGA constitutes follitropin, the follicle-stimulating hormone, and provides its biological specificity to the hormone heterodimer. Binds FSHR, a G protein-coupled receptor, on target cells to activate downstream signaling pathways. Follitropin is involved in follicle development and spermatogenesis in reproductive organs. This is Follitropin subunit beta (FSHB) from Ailuropoda melanoleuca (Giant panda).